Consider the following 254-residue polypeptide: Phosphoribosylaminoimidazole-succinocarboxamide synthase (254 aa).

Belongs to the SAICAR synthetase family.

It catalyses the reaction 5-amino-1-(5-phospho-D-ribosyl)imidazole-4-carboxylate + L-aspartate + ATP = (2S)-2-[5-amino-1-(5-phospho-beta-D-ribosyl)imidazole-4-carboxamido]succinate + ADP + phosphate + 2 H(+). It participates in purine metabolism; IMP biosynthesis via de novo pathway; 5-amino-1-(5-phospho-D-ribosyl)imidazole-4-carboxamide from 5-amino-1-(5-phospho-D-ribosyl)imidazole-4-carboxylate: step 1/2. The polypeptide is Phosphoribosylaminoimidazole-succinocarboxamide synthase (Brucella anthropi (strain ATCC 49188 / DSM 6882 / CCUG 24695 / JCM 21032 / LMG 3331 / NBRC 15819 / NCTC 12168 / Alc 37) (Ochrobactrum anthropi)).